The primary structure comprises 435 residues: Glutamate-1-semialdehyde 2,1-aminomutase (435 aa).

Lys269 is modified (N6-(pyridoxal phosphate)lysine).

Belongs to the class-III pyridoxal-phosphate-dependent aminotransferase family. HemL subfamily. Homodimer. Requires pyridoxal 5'-phosphate as cofactor.

It is found in the cytoplasm. The enzyme catalyses (S)-4-amino-5-oxopentanoate = 5-aminolevulinate. It functions in the pathway porphyrin-containing compound metabolism; protoporphyrin-IX biosynthesis; 5-aminolevulinate from L-glutamyl-tRNA(Glu): step 2/2. The polypeptide is Glutamate-1-semialdehyde 2,1-aminomutase (Gemmatimonas aurantiaca (strain DSM 14586 / JCM 11422 / NBRC 100505 / T-27)).